A 254-amino-acid chain; its full sequence is Thiazole synthase (254 aa).

Lys-95 functions as the Schiff-base intermediate with DXP in the catalytic mechanism. 1-deoxy-D-xylulose 5-phosphate-binding positions include Gly-156, Ala-182–Gly-183, and Asn-204–Thr-205.

The protein belongs to the ThiG family. As to quaternary structure, homotetramer. Forms heterodimers with either ThiH or ThiS.

The protein localises to the cytoplasm. The catalysed reaction is [ThiS sulfur-carrier protein]-C-terminal-Gly-aminoethanethioate + 2-iminoacetate + 1-deoxy-D-xylulose 5-phosphate = [ThiS sulfur-carrier protein]-C-terminal Gly-Gly + 2-[(2R,5Z)-2-carboxy-4-methylthiazol-5(2H)-ylidene]ethyl phosphate + 2 H2O + H(+). It participates in cofactor biosynthesis; thiamine diphosphate biosynthesis. Functionally, catalyzes the rearrangement of 1-deoxy-D-xylulose 5-phosphate (DXP) to produce the thiazole phosphate moiety of thiamine. Sulfur is provided by the thiocarboxylate moiety of the carrier protein ThiS. In vitro, sulfur can be provided by H(2)S. The protein is Thiazole synthase of Shewanella sp. (strain W3-18-1).